A 750-amino-acid polypeptide reads, in one-letter code: Catalase-peroxidase 1 (750 aa).

The tryptophyl-tyrosyl-methioninium (Trp-Tyr) (with M-264) cross-link spans Trp-90–Tyr-238. His-91 (proton acceptor) is an active-site residue. Residues Asn-199 to Lys-218 are disordered. Residues Glu-200–Lys-218 are compositionally biased toward basic and acidic residues. The segment at residues Tyr-238–Met-264 is a cross-link (tryptophyl-tyrosyl-methioninium (Tyr-Met) (with W-90)). A heme b-binding site is contributed by His-279.

It belongs to the peroxidase family. Peroxidase/catalase subfamily. In terms of assembly, homodimer or homotetramer. Predominantly homodimeric. Requires heme b as cofactor. Formation of the three residue Trp-Tyr-Met cross-link is important for the catalase, but not the peroxidase activity of the enzyme.

It localises to the cytoplasm. It catalyses the reaction H2O2 + AH2 = A + 2 H2O. The enzyme catalyses 2 H2O2 = O2 + 2 H2O. Functionally, bifunctional enzyme with both catalase and broad-spectrum peroxidase activity. This Pyricularia oryzae (strain 70-15 / ATCC MYA-4617 / FGSC 8958) (Rice blast fungus) protein is Catalase-peroxidase 1.